Consider the following 668-residue polypeptide: Tastin (668 aa).

Disordered stretches follow at residues 1–102, 154–177, and 189–285; these read MTTL…GGSN, ERKG…PRIP, and FSRL…GRHH. Residue Ser16 is modified to Phosphoserine. Composition is skewed to polar residues over residues 27-37 and 55-64; these read QRCQDFSSVKS and PRSTQRQRPL. Ser97 carries the post-translational modification Phosphoserine. Residues 158-168 show a composition bias toward polar residues; it reads GTTQRGQSARS. At Ser169 the chain carries Phosphoserine. Composition is skewed to basic and acidic residues over residues 227–246 and 269–282; these read ELRR…DRRT and GEQE…DGGG. A phosphoserine mark is found at Ser306, Ser324, and Ser338. Disordered regions lie at residues 364–392 and 462–502; these read ITLQ…HQEL and TEPL…AEPE.

As to quaternary structure, directly binds bystin, and indirectly trophinin.

Its subcellular location is the cytoplasm. Its function is as follows. Could be involved with bystin and trophinin in a cell adhesion molecule complex that mediates an initial attachment of the blastocyst to uterine epithelial cells at the time of the embryo implantation. This chain is Tastin, found in Mus musculus (Mouse).